The primary structure comprises 322 residues: Lipoyl synthase (322 aa).

Positions 1-14 (MKTLDENQAPSRQT) are enriched in polar residues. Residues 1-30 (MKTLDENQAPSRQTPESHRRGAEKLSRIPV) form a disordered region. The segment covering 15-26 (PESHRRGAEKLS) has biased composition (basic and acidic residues). Positions 70, 75, 81, 96, 100, 103, and 310 each coordinate [4Fe-4S] cluster. A Radical SAM core domain is found at 82 to 299 (FGHGTATFMI…AGYARELGFA (218 aa)).

This sequence belongs to the radical SAM superfamily. Lipoyl synthase family. The cofactor is [4Fe-4S] cluster.

It is found in the cytoplasm. The catalysed reaction is [[Fe-S] cluster scaffold protein carrying a second [4Fe-4S](2+) cluster] + N(6)-octanoyl-L-lysyl-[protein] + 2 oxidized [2Fe-2S]-[ferredoxin] + 2 S-adenosyl-L-methionine + 4 H(+) = [[Fe-S] cluster scaffold protein] + N(6)-[(R)-dihydrolipoyl]-L-lysyl-[protein] + 4 Fe(3+) + 2 hydrogen sulfide + 2 5'-deoxyadenosine + 2 L-methionine + 2 reduced [2Fe-2S]-[ferredoxin]. It functions in the pathway protein modification; protein lipoylation via endogenous pathway; protein N(6)-(lipoyl)lysine from octanoyl-[acyl-carrier-protein]: step 2/2. Catalyzes the radical-mediated insertion of two sulfur atoms into the C-6 and C-8 positions of the octanoyl moiety bound to the lipoyl domains of lipoate-dependent enzymes, thereby converting the octanoylated domains into lipoylated derivatives. The polypeptide is Lipoyl synthase (Methylococcus capsulatus (strain ATCC 33009 / NCIMB 11132 / Bath)).